A 436-amino-acid polypeptide reads, in one-letter code: 3-ketoacyl-CoA thiolase (436 aa).

Residue Cys-99 is the Acyl-thioester intermediate of the active site. Active-site proton acceptor residues include His-392 and Cys-422.

It belongs to the thiolase-like superfamily. Thiolase family. Heterotetramer of two alpha chains (FadJ) and two beta chains (FadI).

Its subcellular location is the cytoplasm. It catalyses the reaction an acyl-CoA + acetyl-CoA = a 3-oxoacyl-CoA + CoA. Its pathway is lipid metabolism; fatty acid beta-oxidation. In terms of biological role, catalyzes the final step of fatty acid oxidation in which acetyl-CoA is released and the CoA ester of a fatty acid two carbons shorter is formed. The sequence is that of 3-ketoacyl-CoA thiolase from Photorhabdus laumondii subsp. laumondii (strain DSM 15139 / CIP 105565 / TT01) (Photorhabdus luminescens subsp. laumondii).